The following is a 285-amino-acid chain: Hypersensitive-induced reaction 1 protein (285 aa).

The N-myristoyl glycine moiety is linked to residue G2. Residues 118 to 190 adopt a coiled-coil conformation; sequence FEQKNEIAKS…EKILQIKRAE (73 aa).

Homo- and heterodimer. Interacts with LRR1 (via LRR domain). As to expression, constitutively expressed in stems, roots and flowers, but not in leaves and fruits.

In terms of biological role, positive regulator of hypersensitive response (HR)-like cell death. May be involved in potassium ion channel regulation. The sequence is that of Hypersensitive-induced reaction 1 protein from Capsicum annuum (Capsicum pepper).